We begin with the raw amino-acid sequence, 384 residues long: Sphingosine kinase 1 (384 aa).

A DAGKc domain is found at 12-159 (PRPCRVLVLL…MNLLSLHTAS (148 aa)). Residues 22–24 (NPR) and 54–58 (TERRN) contribute to the ATP site. Position 79 to 82 (79 to 82 (SGDG)) interacts with substrate. The Proton donor/acceptor role is filled by aspartate 81. ATP contacts are provided by residues glutamate 86 and 111–113 (GSG). 2 short sequence motifs (nuclear export signal) span residues 147–155 (LSPMNLLSL) and 161–169 (LRLFSVLSL). Aspartate 178 lines the substrate pocket. The ATP site is built by arginine 185 and arginine 191. At threonine 193 the chain carries Phosphothreonine. Serine 225 bears the Phosphoserine mark. 341 to 343 (DGE) is a binding site for ATP.

Interacts with ACY1. Binds to calmodulin. Interacts with SPHKAP. Interacts with CIB1, the interaction occurs in a calcium-dependent manner. Interacts with TRAF2. Interacts with EEF1A1; the interaction enhances SPHK1 kinase activity. Requires Mg(2+) as cofactor. As to expression, widely expressed with highest levels in adult liver, kidney, heart and skeletal muscle. Expressed in brain cortex (at protein level).

The protein resides in the cytoplasm. Its subcellular location is the nucleus. The protein localises to the cell membrane. It localises to the endosome membrane. It is found in the membrane. The protein resides in the clathrin-coated pit. Its subcellular location is the synapse. It carries out the reaction a sphingoid base + ATP = a sphingoid 1-phosphate + ADP + H(+). The enzyme catalyses L-seryl-[protein] + acetyl-CoA = O-acetyl-L-seryl-[protein] + CoA. It catalyses the reaction sphinganine + ATP = sphinganine 1-phosphate + ADP + H(+). The catalysed reaction is sphing-4-enine + ATP = sphing-4-enine 1-phosphate + ADP + H(+). It carries out the reaction 1-O-hexadecyl-2-amino-sn-glycerol + ATP = 1-O-hexadecyl-2-desoxy-2-amino-sn-glycero-3-phosphate + ADP + H(+). Acetyltransferase activity increases in presence of the kinase substrate, sphingosine. In Purkinje cells, kinase activity on sphingosine increases in presence of VEGFA. In neurons, kinase activity increases during the first 24h in presence of Amyloid-beta protein 42 to decrease after 96h. Its function is as follows. Catalyzes the phosphorylation of sphingosine to form sphingosine 1-phosphate (SPP), a lipid mediator with both intra- and extracellular functions. Also acts on D-erythro-sphingosine and to a lesser extent sphinganine, but not other lipids, such as D,L-threo-dihydrosphingosine, N,N-dimethylsphingosine, diacylglycerol, ceramide, or phosphatidylinositol. In contrast to proapoptotic SPHK2, has a negative effect on intracellular ceramide levels, enhances cell growth and inhibits apoptosis. Involved in the regulation of inflammatory response and neuroinflammation. Via the product sphingosine 1-phosphate, stimulates TRAF2 E3 ubiquitin ligase activity, and promotes activation of NF-kappa-B in response to TNF signaling leading to IL17 secretion. In response to TNF and in parallel to NF-kappa-B activation, negatively regulates RANTES induction through p38 MAPK signaling pathway. Involved in endocytic membrane trafficking induced by sphingosine, recruited to dilate endosomes, also plays a role on later stages of endosomal maturation and membrane fusion independently of its kinase activity. In Purkinje cells, seems to be also involved in the regulation of autophagosome-lysosome fusion upon VEGFA. In terms of biological role, has serine acetyltransferase activity on PTGS2/COX2 in an acetyl-CoA dependent manner. The acetyltransferase activity increases in presence of the kinase substrate, sphingosine. During neuroinflammation, through PTGS2 acetylation, promotes neuronal secretion of specialized preresolving mediators (SPMs), especially 15-R-lipoxin A4, which results in an increase of phagocytic microglia. The protein is Sphingosine kinase 1 of Homo sapiens (Human).